We begin with the raw amino-acid sequence, 570 residues long: Sulfite reductase [NADPH] hemoprotein beta-component (570 aa).

4 residues coordinate [4Fe-4S] cluster: cysteine 434, cysteine 440, cysteine 479, and cysteine 483. Cysteine 483 contacts siroheme.

Belongs to the nitrite and sulfite reductase 4Fe-4S domain family. As to quaternary structure, alpha(8)-beta(8). The alpha component is a flavoprotein, the beta component is a hemoprotein. Siroheme is required as a cofactor. It depends on [4Fe-4S] cluster as a cofactor.

It carries out the reaction hydrogen sulfide + 3 NADP(+) + 3 H2O = sulfite + 3 NADPH + 4 H(+). The protein operates within sulfur metabolism; hydrogen sulfide biosynthesis; hydrogen sulfide from sulfite (NADPH route): step 1/1. In terms of biological role, component of the sulfite reductase complex that catalyzes the 6-electron reduction of sulfite to sulfide. This is one of several activities required for the biosynthesis of L-cysteine from sulfate. The sequence is that of Sulfite reductase [NADPH] hemoprotein beta-component (cysI) from Salmonella typhimurium (strain LT2 / SGSC1412 / ATCC 700720).